We begin with the raw amino-acid sequence, 236 residues long: MPRSKRSKLVTLAQTEKKGRENKERIFDEVRQALDTYRYVWVLRLEDVRTPVLQEIRSAWAGSKLIMGRRKVLEKALGGTRETEYKENVSGLVKQCEGMCGLLFTDETPETVTAYFREYRKADYSRAKSRAPLRVEIPAGVVYSRGGQVPAEDDVPMVHSLEPTLRNKFKMPTRIQNGKITLEQPYLVCEAGETLDVRQALILKQFGVAAAEFRVKLAAYYDGEAAAVEEVRINME.

The protein belongs to the universal ribosomal protein uL10 family. As to quaternary structure, associates with the pre-60S ribosomal particle.

It localises to the nucleus. The protein localises to the nucleolus. The protein resides in the cytoplasm. Its function is as follows. Component of the ribosome assembly machinery. Nuclear paralog of the ribosomal protein P0, it binds pre-60S subunits at an early stage of assembly in the nucleolus, and is replaced by P0 in cytoplasmic pre-60S subunits and mature 80S ribosomes. This is Ribosome assembly factor mrt4 from Eremothecium gossypii (strain ATCC 10895 / CBS 109.51 / FGSC 9923 / NRRL Y-1056) (Yeast).